Here is a 212-residue protein sequence, read N- to C-terminus: dTTP/UTP pyrophosphatase (212 aa).

Residue D88 is the Proton acceptor of the active site.

The protein belongs to the Maf family. YhdE subfamily. It depends on a divalent metal cation as a cofactor.

Its subcellular location is the cytoplasm. The enzyme catalyses dTTP + H2O = dTMP + diphosphate + H(+). The catalysed reaction is UTP + H2O = UMP + diphosphate + H(+). In terms of biological role, nucleoside triphosphate pyrophosphatase that hydrolyzes dTTP and UTP. May have a dual role in cell division arrest and in preventing the incorporation of modified nucleotides into cellular nucleic acids. This Colwellia psychrerythraea (strain 34H / ATCC BAA-681) (Vibrio psychroerythus) protein is dTTP/UTP pyrophosphatase.